We begin with the raw amino-acid sequence, 512 residues long: tRNA-2-methylthio-N(6)-dimethylallyladenosine synthase (512 aa).

Residues methionine 1–alanine 22 form a disordered region. In terms of domain architecture, MTTase N-terminal spans arginine 25–histidine 141. Positions 34, 70, 104, 178, 182, and 185 each coordinate [4Fe-4S] cluster. Residues arginine 164–glutamate 400 enclose the Radical SAM core domain. The TRAM domain occupies arginine 403–valine 471.

The protein belongs to the methylthiotransferase family. MiaB subfamily. In terms of assembly, monomer. [4Fe-4S] cluster serves as cofactor.

Its subcellular location is the cytoplasm. The catalysed reaction is N(6)-dimethylallyladenosine(37) in tRNA + (sulfur carrier)-SH + AH2 + 2 S-adenosyl-L-methionine = 2-methylsulfanyl-N(6)-dimethylallyladenosine(37) in tRNA + (sulfur carrier)-H + 5'-deoxyadenosine + L-methionine + A + S-adenosyl-L-homocysteine + 2 H(+). Functionally, catalyzes the methylthiolation of N6-(dimethylallyl)adenosine (i(6)A), leading to the formation of 2-methylthio-N6-(dimethylallyl)adenosine (ms(2)i(6)A) at position 37 in tRNAs that read codons beginning with uridine. The protein is tRNA-2-methylthio-N(6)-dimethylallyladenosine synthase of Mycobacterium bovis (strain ATCC BAA-935 / AF2122/97).